Here is a 222-residue protein sequence, read N- to C-terminus: MVKCCSAIGCASRCLPNSKLKGLTFHVFPTDENIKRKWVLAMKRLDVNAAGIWEPKKGDVLCSRHFKKTDFDRSAPNIKLKPGVIPSIFDSPYHLQGKREKLHCRKNFTLKTVPATNYNHHLVGASSCIEEFQSQFIFEHSYSVMDSPKKLKHKLDHVIGELEDTKESLRNVLDREKRFQKSLRKTIRELKDECLISQETANRLDTFCWDCCQESIEQDYIS.

The THAP-type zinc-finger motif lies at 1 to 89 (MVKCCSAIGC…LKPGVIPSIF (89 aa)). Positions 139-142 (EHSY) match the HCFC1-binding motif (HBM) motif. A coiled-coil region spans residues 149 to 194 (KKLKHKLDHVIGELEDTKESLRNVLDREKRFQKSLRKTIRELKDEC).

This chain is THAP domain-containing protein 6 (THAP6), found in Homo sapiens (Human).